The following is a 362-amino-acid chain: Peptide chain release factor 1 (362 aa).

N5-methylglutamine is present on Q236.

It belongs to the prokaryotic/mitochondrial release factor family. Methylated by PrmC. Methylation increases the termination efficiency of RF1.

The protein localises to the cytoplasm. In terms of biological role, peptide chain release factor 1 directs the termination of translation in response to the peptide chain termination codons UAG and UAA. The polypeptide is Peptide chain release factor 1 (Lactobacillus gasseri (strain ATCC 33323 / DSM 20243 / BCRC 14619 / CIP 102991 / JCM 1131 / KCTC 3163 / NCIMB 11718 / NCTC 13722 / AM63)).